The chain runs to 131 residues: Steroid Delta-isomerase (131 aa).

Tyr16 acts as the Proton donor in catalysis. The Proton acceptor role is filled by Asp40. Asp103 is a binding site for substrate.

As to quaternary structure, homodimer.

It catalyses the reaction a 3-oxo-Delta(5)-steroid = a 3-oxo-Delta(4)-steroid. The chain is Steroid Delta-isomerase (ksi) from Pseudomonas putida (Arthrobacter siderocapsulatus).